Here is a 215-residue protein sequence, read N- to C-terminus: Probable transaldolase (215 aa).

Residue Lys83 is the Schiff-base intermediate with substrate of the active site.

Belongs to the transaldolase family. Type 3B subfamily.

It localises to the cytoplasm. It carries out the reaction D-sedoheptulose 7-phosphate + D-glyceraldehyde 3-phosphate = D-erythrose 4-phosphate + beta-D-fructose 6-phosphate. It participates in carbohydrate degradation; pentose phosphate pathway; D-glyceraldehyde 3-phosphate and beta-D-fructose 6-phosphate from D-ribose 5-phosphate and D-xylulose 5-phosphate (non-oxidative stage): step 2/3. Its function is as follows. Transaldolase is important for the balance of metabolites in the pentose-phosphate pathway. In Pelotomaculum thermopropionicum (strain DSM 13744 / JCM 10971 / SI), this protein is Probable transaldolase.